Reading from the N-terminus, the 204-residue chain is FMN-dependent NADH:quinone oxidoreductase (204 aa).

Residues serine 10, serine 15 to serine 17, and threonine 139 to glycine 142 contribute to the FMN site.

It belongs to the azoreductase type 1 family. In terms of assembly, homodimer. It depends on FMN as a cofactor.

It catalyses the reaction 2 a quinone + NADH + H(+) = 2 a 1,4-benzosemiquinone + NAD(+). The enzyme catalyses N,N-dimethyl-1,4-phenylenediamine + anthranilate + 2 NAD(+) = 2-(4-dimethylaminophenyl)diazenylbenzoate + 2 NADH + 2 H(+). Functionally, quinone reductase that provides resistance to thiol-specific stress caused by electrophilic quinones. Its function is as follows. Also exhibits azoreductase activity. Catalyzes the reductive cleavage of the azo bond in aromatic azo compounds to the corresponding amines. The sequence is that of FMN-dependent NADH:quinone oxidoreductase from Rhizobium leguminosarum bv. trifolii (strain WSM2304).